The following is a 147-amino-acid chain: Peptide methionine sulfoxide reductase MsrB (147 aa).

One can recognise a MsrB domain in the interval 8 to 131; it reads KEELKKILTE…NSASLKFIPK (124 aa). Cys120 serves as the catalytic Nucleophile.

This sequence belongs to the MsrB Met sulfoxide reductase family.

The catalysed reaction is L-methionyl-[protein] + [thioredoxin]-disulfide + H2O = L-methionyl-(R)-S-oxide-[protein] + [thioredoxin]-dithiol. The chain is Peptide methionine sulfoxide reductase MsrB from Clostridium perfringens (strain SM101 / Type A).